A 215-amino-acid chain; its full sequence is Soluble inorganic pyrophosphatase (215 aa).

Low complexity predominate over residues 1-21; sequence MSQEDSTSAAAAQQPTSRPAP. A disordered region spans residues 1–24; the sequence is MSQEDSTSAAAAQQPTSRPAPKLN. 3 residues coordinate Mg(2+): aspartate 103, aspartate 108, and aspartate 140.

This sequence belongs to the PPase family. It depends on Mg(2+) as a cofactor. Expressed in metabolically active tissue such as root, shoot, embryo and aleurone.

It is found in the cytoplasm. The enzyme catalyses diphosphate + H2O = 2 phosphate + H(+). Functionally, may play a role in germination. This Hordeum vulgare subsp. vulgare (Domesticated barley) protein is Soluble inorganic pyrophosphatase (IPP).